Consider the following 71-residue polypeptide: uncharacterized protein (71 aa).

A signal peptide spans 1 to 26 (MIKFSVILGMIRCSLTHITTKNTVNA).

This is an uncharacterized protein from Bacillus subtilis (strain 168).